A 152-amino-acid chain; its full sequence is Endoribonuclease YbeY (152 aa).

3 residues coordinate Zn(2+): His-118, His-122, and His-128.

The protein belongs to the endoribonuclease YbeY family. It depends on Zn(2+) as a cofactor.

It is found in the cytoplasm. Functionally, single strand-specific metallo-endoribonuclease involved in late-stage 70S ribosome quality control and in maturation of the 3' terminus of the 16S rRNA. This chain is Endoribonuclease YbeY, found in Pelotomaculum thermopropionicum (strain DSM 13744 / JCM 10971 / SI).